Consider the following 351-residue polypeptide: Cytoplasmic dynein 2 light intermediate chain 1 (351 aa).

Belongs to the dynein light intermediate chain family. As to quaternary structure, light intermediate chain of the cytoplasmic dynein complex 2, a multisubunit complex composed at least of eleven different proteins. The cytoplasmic dynein 2 complex consists of two catalytic heavy chains (HCs) and a number of non-catalytic subunits presented by intermediate chains (ICs), light intermediate chains (LICs) and light chains (LCs). Among them, a heavy chain (DYNC2H1), two intermediate chains (DYNC2I2 and DYNC2I1), a light intermediate chain (DYNC2LI1), and a light chain (DYNLT2B) are unique to the dynein-2 complex, but a subset of light chains are also shared by dynein-1 and dynein-2 complexes. Dynein-2 complex is built around two copies of cytoplasmic dynein 2 heavy chain 1 (DYNC2H1). The C-terminal region of DYNC2H1 forms the motor domain, which converts the energy from ATP hydrolysis into movement. Its N-terminal region forms the tail, an extended structure that binds the other subunits and holds the two heavy chains in a homodimer. Interacts with DYNC2H1 (via N-terminus); this interaction stabilizes the dynein-2 complex structure. In terms of tissue distribution, expressed in bone, brain, kidney, and cartilage. Lower expression in heart, liver, lung, placenta and thymus.

It localises to the golgi apparatus. Its subcellular location is the cytoplasm. It is found in the cell projection. The protein localises to the cilium. The protein resides in the cytoskeleton. It localises to the cilium basal body. Its subcellular location is the cilium axoneme. It is found in the microtubule organizing center. The protein localises to the centrosome. In terms of biological role, acts as one of several non-catalytic accessory components of the cytoplasmic dynein 2 complex (dynein-2 complex), a motor protein complex that drives the movement of cargos along microtubules within cilia and flagella in concert with the intraflagellar transport (IFT) system, facilitating the assembly of these organelles. Involved in the regulation of ciliary length. The sequence is that of Cytoplasmic dynein 2 light intermediate chain 1 (DYNC2LI1) from Homo sapiens (Human).